We begin with the raw amino-acid sequence, 403 residues long: G-protein coupled receptor family C group 5 member B (403 aa).

A signal peptide spans 1–28 (MFVASERKMRAHQVLTFLLLFVITSVAS). Residues 29 to 56 (ENASTSRGCGLDLLPQYVSLCDLDAIWG) are Extracellular-facing. A glycan (N-linked (GlcNAc...) asparagine) is linked at Asn30. The chain crosses the membrane as a helical span at residues 57 to 77 (IVVEAVAGAGALITLLLMLIL). Residues 78–94 (LVRLPFIKEKEKKSPVG) lie on the Cytoplasmic side of the membrane. The helical transmembrane segment at 95 to 115 (LHFLFLLGTLGLFGLTFAFII) threads the bilayer. The Extracellular segment spans residues 116–126 (QEDETICSVRR). A helical membrane pass occupies residues 127-147 (FLWGVLFALCFSCLLSQAWRV). The Cytoplasmic portion of the chain corresponds to 148-162 (RRLVRHGTGPAGWQL). A helical membrane pass occupies residues 163 to 183 (VGLALCLMLVQVIIAVEWLVL). Residues 184-199 (TVLRDTRPACAYEPMD) are Extracellular-facing. The helical transmembrane segment at 200–220 (FVMALIYDMVLLVVTLGLALF) threads the bilayer. Residues 221–234 (TLCGKFKRWKLNGA) are Cytoplasmic-facing. The helical transmembrane segment at 235-255 (FLLITAFLSVLIWVAWMTMYL) threads the bilayer. Residues 256–271 (FGNVKLQQGDAWNDPT) lie on the Extracellular side of the membrane. A helical membrane pass occupies residues 272-292 (LAITLAASGWVFVIFHAIPEI). Topologically, residues 293–403 (HCTLLPALQE…PPSHTGRHLW (111 aa)) are cytoplasmic. The segment at 349–371 (GFPNGSLGKRPSGSLGKRPSAPF) is disordered. A Phosphoserine modification is found at Ser354.

It belongs to the G-protein coupled receptor 3 family. As to expression, expression is high in kidney, pancreas, and testis, medium in brain, heart, prostate, small intestine, and spleen, low in liver, placenta, skeletal muscle, colon, ovary, and thymus, and not detectable in lung and peripheral leukocyte. According to PubMed:10945465, highly expressed in most brain areas examined, with the highest levels observed in corpus callosum, caudate nucleus, putamen, substantia nigra, thalamus, hippocampus, and spinal cord as well as in dorsal root ganglia (DRG). Expressed in glia limitans, ependymal cells, astrocyte cell bodies, the perivascular region in astrocyte endfeet, but not in neurons. In the periphery, expression levels are relatively low, compared to the CNS, with the strongest expression detected in pancreas, testis, uterus, and stomach.

It localises to the cell membrane. It is found in the cytoplasmic vesicle membrane. In terms of biological role, G-protein coupled receptor involved in the regulation of cell volume. This is G-protein coupled receptor family C group 5 member B (GPRC5B) from Homo sapiens (Human).